The following is a 64-amino-acid chain: Large ribosomal subunit protein bL33 (64 aa).

It belongs to the bacterial ribosomal protein bL33 family.

The polypeptide is Large ribosomal subunit protein bL33 (Synechococcus elongatus (strain ATCC 33912 / PCC 7942 / FACHB-805) (Anacystis nidulans R2)).